The chain runs to 187 residues: Cytokinin riboside 5'-monophosphate phosphoribohydrolase (187 aa).

An Isoglutamyl lysine isopeptide (Lys-Gln) (interchain with Q-Cter in protein Pup) cross-link involves residue Lys74. Residues Glu80, 98–99 (RK), 115–121 (GVGTLDE), and Thr127 each bind substrate.

This sequence belongs to the LOG family. In terms of assembly, homodimer. Pupylated at Lys-74 by the prokaryotic ubiquitin-like protein Pup, which leads to its degradation by the proteasome. The proteasomal control of cytokinin synthesis is essential to protect M.tuberculosis against host-produced NO.

The enzyme catalyses N(6)-(dimethylallyl)adenosine 5'-phosphate + H2O = N(6)-dimethylallyladenine + D-ribose 5-phosphate. The catalysed reaction is 9-ribosyl-trans-zeatin 5'-phosphate + H2O = trans-zeatin + D-ribose 5-phosphate. Functionally, catalyzes the hydrolytic removal of ribose 5'-monophosphate from nitrogen N6-modified adenosines, the final step of bioactive cytokinin synthesis. Is involved in the synthesis of isopentenyladenine (iP) and 2-methylthio-iP (2MeS-iP), the most abundant cytokinins detected in M.tuberculosis lysates and supernatants. Is also able to convert trans-zeatin-riboside monophosphate (tZRMP) to trans-zeatin (tZ) in vitro; however, it may not be involved in the biosynthesis of this minor cytokinin in vivo. Accumulation of Rv1205 sensitizes M.tuberculosis to nitric oxide since cytokinin breakdown products synergize with NO to kill M.tuberculosis. Shows a slow AMP hydrolase activity, but is not able to hydrolyze ATP. Displays no lysine decarboxylase (LDC) activity (L-lysine conversion to cadaverine). The protein is Cytokinin riboside 5'-monophosphate phosphoribohydrolase of Mycobacterium tuberculosis (strain ATCC 25618 / H37Rv).